Consider the following 2218-residue polypeptide: MEEDIACVKDLVSKYLVDNERLSRQKLAFLVQTEPRMLLMEGLKLLSLCIEVDSCNANGCEHNSEDKSVERILHDHGILTPSLCLWYPDGYKLTGNVLILLECFVRSSPANFEQKYIEDFKKLEQLKEDLKSVDINLIPLIDGRTSFYNEQIPDWVNDKLRDTLFSLLKYAQESNSLFEESEYSRLCESLFMTSGRLSGVESLNVLMDNRSNHYEEVIASCHQGINNKLTAHEVKLQIEEEYQVFRNRLRKGEIEGQFLKVDKSQLLNELNNLYADKVVAEDNIEHLIYQFKRASPILRFLYANVDEGNEKRGNQTIGECQVQCWRSFLNKVKSLRILNTRRKLLLIFDALILLASKHDLMKQKCLKGWLGSCFLRVKDRLVSLEATKRDLEKWGERGNRLRSRITQSSQCLSKNQILNSIFQKTILKATTALKDVGISVDHYKIDMEVICLNSYDLIMDFDVSGVVPTISYQRTEEETFPYVMGDVELLGTTDLERLSSLSLALVNSMKTSSTVKLRQNEFGPARYQVVRCKEAYCQEFSLGNTELQLIYQKTGECSKCYAINDNKVGEVCSFYADPKRYFPAIFSAEVLQTTISTMISWIEDCNELEGQLNNIRSLTKMILVLILAHPSKRSQKLLQNLRYFVMAYLSDYHHKDLIDKIREELITDVEFLLYRLIRTLMNLVLSEDVKSMMTNRFKFILNVSYMCHFITKETPDRLTDQIKCFEKFLEPKVRFGHVSTNPADTATEEELDDMVYNAKKFLSKDGCTTIEGPDYKRPGVSKKYLSLLTSSFNNGSLFKEREVKREIKDPLITSGSAALDLASKKSVVVNKYTDGSRILNYDFNKLTALAVSQLTEVFSRKGKYLLNKQDYEYKVQQAMSNLVLGSGQLKSDADGADLDEILLDGGASDYFDQLKETVEKIVDQYREPVKLGSGPNGDGQPSINDLDEIVSNKFYIRLIKGELSNHMVEEFDHDILPGKFYEEFCNAVYENSRLKQKYFYCGHMSQCPIGELTKAVSTRTYFNHEYFQCFKSILLIMNANTLMGRYTHYKSRNLNFKFDMGKLSDDVRISERESNSEALSKALSLTNCTTAMLKNLCFYSQESPQSYDSVGPDTGRLKFSLSYKEQVGGNRELYIGDLRTKMFTRLIEDYFEAISLQLSGSCLNNEKEFENAILSMKLNVSLAHVSYSMDHSKWGPMMCPFLFLTVLQNLIFLSKDLQADIKGRDYLSTLLMWHMHKMVEIPFNVVTAMMKSFIKAQLGLRKKTKQSITEDFFYSNFQAGVVPSHISSILDMGQGILHNTSDFYALISERFINYAISCICGGTIDAYTSSDDQISLFDQSLTELLQRDPEEFRTLIEFHYYMSDQLNKFVSPKSVIGRFVAEFKSRFFVWGDEVPLLTKFVAAALHNIKCKEPHQLAETIDTIIDQSVANGVPVHLCNLIQKRTLNPLQYARYPIDPFLLNCETDVRDWVDGNRSYRIMRQIEGLIPNACSKIRSMLRKLYNRLKTGQLHEEFTTNYLSSEHLSSLRNLCELLDVEPPSESDLEYSWLNLAAHHPLRMVLRQKIIYSGAVNLDDEKIPTIVKTIQNKLSSTFTRGAQKLLSEAINKSAFQSSIASGFVGLCRTLGSKCVRGPNKENLYIKSIQSLISDVKGIKLLTNSNGIQYWQVPLELRNGSGGESVVSYFRPLLWDYMCISLSTAIELGAWVLGEPKTVKVFDFFKHNPCDYFPLKPTASKLLEDRVGLNHIIHSLRRLYPSVFEKHILPFMSDLASTKMKWSPRIKFLDLCVALDVNCEALSLVSHIVKWKREEHYIVLSSELRLSHSRTHEPMVEERVVSTSDAVDNFMRQIYFESYVRPFVATTRTLGSFTWFPHKTSVPEGEGLHRMGPFSSFVEKVIHKGVERPMFKHDLMMGYAWIDFDIEPARFNQNQLIASGLVDPKFDSLEDFFDAVASLPPGSAKLSQTVRFRVKSQDASFKESFAIHLEYTGSMNQQAKYLVHDVTVMYSGAVSPCVLSDCWRLVLSGPTFKGKSAWYVDTEIINEFLIDTNQLGHVTPVEIVVDMERLQFTEYDFVLVGPCTEPTPLVVHRGGLWECGKKLASFTPVIQDQDLEIFVREVGDTSSDLLIGALSDMMIDRLGLRMQWSGVDIVSTLRAAAPSCEGILSAVLEAVDNWVEFKGYALCYSKSRGKVMVQSSGGKLRLKGRTCEELTRKDECIEDIE.

Residues 26–288 (KLAFLVQTEP…VAEDNIEHLI (263 aa)) are endonuclease. Positions 51, 89, and 102 each coordinate Mn(2+). The active site involves Lys-115. Residues 1174 to 1370 (LSMKLNVSLA…YMSDQLNKFV (197 aa)) enclose the RdRp catalytic domain. Asp-1332 serves as a coordination point for Mg(2+).

This sequence belongs to the Bunyavirales RNA polymerase family. In terms of assembly, homomultimer; the oligomeric structure is essential for the polymerase activity. Interacts with nucleoprotein N. Interacts with protein Z; this interaction inhibits viral transcription and replication, Z partially blocks the product exit tunnel for the releasing nascent RNA product. Mn(2+) is required as a cofactor. Mg(2+) serves as cofactor.

The protein resides in the virion. It localises to the host cytoplasm. The enzyme catalyses RNA(n) + a ribonucleoside 5'-triphosphate = RNA(n+1) + diphosphate. In terms of biological role, RNA-dependent RNA polymerase, which is responsible for the replication and transcription of the viral RNA genome using antigenomic RNA as an intermediate. During transcription, synthesizes subgenomic RNAs and assures their capping by a cap-snatching mechanism, which involves the endonuclease activity cleaving the host capped pre-mRNAs. These short capped RNAs are then used as primers for viral transcription. The 3'-end of subgenomic mRNAs molecules are heterogeneous and not polyadenylated. The replicase function is to direct synthesis of antigenomic and genomic RNA which are encapsidated and non capped. As a consequence of the use of the same enzyme for both transcription and replication, these mechanisms need to be well coordinated. These processes may be regulated by proteins N and Z in a dose-dependent manner. Z protein inhibits the viral polymerase L und thus the viral transcription and RNA synthesis. In Lassa virus (strain Mouse/Sierra Leone/Josiah/1976) (LASV), this protein is RNA-directed RNA polymerase L.